The primary structure comprises 539 residues: Chaperonin GroEL (539 aa).

ATP is bound by residues 29-32, 86-90, Gly413, 476-478, and Asp492; these read TIGP, DGTTT, and NAA.

It belongs to the chaperonin (HSP60) family. In terms of assembly, forms a cylinder of 14 subunits composed of two heptameric rings stacked back-to-back. Interacts with the co-chaperonin GroES.

The protein localises to the cytoplasm. The enzyme catalyses ATP + H2O + a folded polypeptide = ADP + phosphate + an unfolded polypeptide.. Together with its co-chaperonin GroES, plays an essential role in assisting protein folding. The GroEL-GroES system forms a nano-cage that allows encapsulation of the non-native substrate proteins and provides a physical environment optimized to promote and accelerate protein folding. The protein is Chaperonin GroEL of Staphylococcus haemolyticus (strain JCSC1435).